The primary structure comprises 90 residues: MTRTVMCRKYKEQLEGLERPPYPGAKGQDIFEHVSAKAWADWQKHQTLLINEKRLNMMNAEDRKFLQGEMDKYFSGEEYAQAEGYVPPAE.

It belongs to the Fe(2+)-trafficking protein family.

In terms of biological role, could be a mediator in iron transactions between iron acquisition and iron-requiring processes, such as synthesis and/or repair of Fe-S clusters in biosynthetic enzymes. The sequence is that of Probable Fe(2+)-trafficking protein from Pseudomonas fluorescens (strain Pf0-1).